Here is a 1413-residue protein sequence, read N- to C-terminus: Leucine-rich repeat receptor protein kinase MSL1 (1413 aa).

The N-terminal stretch at 1 to 23 (MAPMLSIASRSPSPALIAPHASA) is a signal peptide. Asn153 and Asn192 each carry an N-linked (GlcNAc...) asparagine glycan. LRR repeat units lie at residues 185–209 (FQSLVRLNVSGCGFSGELPEAMVNL), 210–233 (QHLQHLDLSDNQLGGPLPASLFDL), 235–257 (MLKVMVLDNNMFSGQLSPAIAHL), 258–281 (QQLTVLSISTNSFSGGLPPELGSL), 282–304 (KNLEYLDIHTNAFSGSIPASFSN), 306–329 (SRLLYLDANNNNLTGSIFPGIRAL), 330–353 (VNLVKLDLSSNGLVGAIPKELCQL), 354–377 (KNLQSLILSDNELTGSIPEEIGNL), 379–401 (QLEVLNLLKCNLMDTVPLSIGNL), 402–425 (EILEGLYISFNSFSGELPASVGEL), 427–449 (NLRQLMAKSAGFTGSIPKELGNC), 450–473 (KKLTTLVLSGNNFTGTIPEELADL), 475–497 (AVVLFDVEGNRLSGHIPDWIQNW), 498–518 (SNVSSISLAQNMFDGPLPGLP), 519–542 (LHLVSFSAESNRLSGSIPAKICQG), 543–565 (TFLQILRLNDNNLTGSIDETFKG), 567–589 (KNLTELSLLDNHLHGEIPEYLAL), 590–613 (LPLVSLDLSHNNFTGMIPDRLWES), 615–636 (TILDISLSDNQLTGMITESIGK), 637–661 (LLSLQSLSIDRNYLQGPLPRSIGAL), 662–685 (RNLTALSLSGNMLSEDIPIQLFNC), 687–709 (NLVTLDLSCNNLTGHIPKAISHL), 710–733 (TKLNTLVLSRNRLSGAIPSELCVA), 745–769 (VQHIGLIDLSRNRLTGHIPRAINNC), 771–793 (ILVELHLQDNLLSGTIPVELAEL), 794–817 (RNITTIDLSSNALVGPVLPWPVPL), 818–841 (ASLQGLLLSNNRLSGSIPSGIGNI), 843–866 (PQITMLDLSGNALTGTLPLDLLCK), and 868–890 (SLNHLDVSDNNISGQIPFSCHED). Residues Asn304 and Asn317 are each glycosylated (N-linked (GlcNAc...) asparagine). N-linked (GlcNAc...) asparagine glycans are attached at residues Asn461, Asn496, and Asn499. 3 N-linked (GlcNAc...) asparagine glycosylation sites follow: Asn554, Asn568, and Asn601. N-linked (GlcNAc...) asparagine glycans are attached at residues Asn663 and Asn697. Asn768 is a glycosylation site (N-linked (GlcNAc...) asparagine). The N-linked (GlcNAc...) asparagine glycan is linked to Asn795. N-linked (GlcNAc...) asparagine glycosylation is found at Asn878, Asn901, Asn917, and Asn928. 2 LRR repeats span residues 918–942 (FTKLTYLDLHNNSLTGRLPSAIARV) and 944–966 (SLYYLDLSSNDFSGTIPCGICGM). The N-linked (GlcNAc...) asparagine glycan is linked to Asn973. The chain crosses the membrane as a helical span at residues 1016 to 1036 (TICCIATAIVIVLVVILVVYL). Positions 1107-1401 (FDGMHVVGDG…IEAMEYGPLV (295 aa)) constitute a Protein kinase domain. ATP is bound by residues 1113–1121 (VGDGGFGTV) and Lys1135. Catalysis depends on Asp1234, which acts as the Proton acceptor.

This sequence belongs to the protein kinase superfamily. Ser/Thr protein kinase family. Expressed in roots, leaves, shoots and spikelets.

Its subcellular location is the cell membrane. The catalysed reaction is L-seryl-[protein] + ATP = O-phospho-L-seryl-[protein] + ADP + H(+). It carries out the reaction L-threonyl-[protein] + ATP = O-phospho-L-threonyl-[protein] + ADP + H(+). Receptor-like kinase that may play a role male and female sporogenesis. The chain is Leucine-rich repeat receptor protein kinase MSL1 from Oryza sativa subsp. japonica (Rice).